A 535-amino-acid polypeptide reads, in one-letter code: MKNISEIINIPEDYYDLYGRYIAKVSLNVLDYLKNKRYGKLILVTAMTPTPAGEGKTTTAIGLGNALKLLGKNAGIAIREPSLGPCFGVKGGATGGGKSTVEPSNKINLMFTGDFPAVSAAHNLLSAVINNHMYHGNELKLDPKNIVFPRTIDMDDRSLRSIIVGSGDRSTGVMMNDKYVITAASEVMAILALSRNYNELKQRLGNIMIGYNLNKAPIFARDLKVHGAMASLLVDALRPNIAQTSEHVPAIIHTGPFGNIAHGTSSILGDIIGLKMFDYLVTEAGFGSDLGFEKFIDIVLRLSDFKLSAVVLVATVRAMRYHGGGRINEPDVNAVLRGSENLMWHVQNIKKFGFNPVVAINRHSNDTDAEINAISNILTKNGVEFSISDAYSDGGHGALDLAGKVLKSISDYNPRYIYGINDDPEEKISKIAMNVYNANSVEFSHDAVKTMKLIKDDFSDLYVCMAKTQSSISDNAKLINVPEGFTVKINGININSGSGFIIPLLGNIMTMPGLPRRPASENIDIDDYGNITGLQ.

An ATP-binding site is contributed by 50–57; it reads TPAGEGKT.

It belongs to the formate--tetrahydrofolate ligase family.

It carries out the reaction (6S)-5,6,7,8-tetrahydrofolate + formate + ATP = (6R)-10-formyltetrahydrofolate + ADP + phosphate. Its pathway is one-carbon metabolism; tetrahydrofolate interconversion. The polypeptide is Formate--tetrahydrofolate ligase (Picrophilus torridus (strain ATCC 700027 / DSM 9790 / JCM 10055 / NBRC 100828 / KAW 2/3)).